Reading from the N-terminus, the 476-residue chain is Glutamate--tRNA ligase (476 aa).

The 'HIGH' region motif lies at 8–18 (PSPTGTLHIGT). Positions 247–251 (KLSKR) match the 'KMSKS' region motif. Residue Lys250 participates in ATP binding.

It belongs to the class-I aminoacyl-tRNA synthetase family. Glutamate--tRNA ligase type 1 subfamily. In terms of assembly, monomer.

The protein localises to the cytoplasm. It catalyses the reaction tRNA(Glu) + L-glutamate + ATP = L-glutamyl-tRNA(Glu) + AMP + diphosphate. Its function is as follows. Catalyzes the attachment of glutamate to tRNA(Glu) in a two-step reaction: glutamate is first activated by ATP to form Glu-AMP and then transferred to the acceptor end of tRNA(Glu). The protein is Glutamate--tRNA ligase of Synechococcus sp. (strain WH7803).